The primary structure comprises 313 residues: tRNA-cytidine(32) 2-sulfurtransferase (313 aa).

Residues 46–51 (SGGKDS) carry the PP-loop motif motif. 3 residues coordinate [4Fe-4S] cluster: C121, C124, and C212.

Belongs to the TtcA family. Homodimer. It depends on Mg(2+) as a cofactor. The cofactor is [4Fe-4S] cluster.

Its subcellular location is the cytoplasm. It carries out the reaction cytidine(32) in tRNA + S-sulfanyl-L-cysteinyl-[cysteine desulfurase] + AH2 + ATP = 2-thiocytidine(32) in tRNA + L-cysteinyl-[cysteine desulfurase] + A + AMP + diphosphate + H(+). The protein operates within tRNA modification. In terms of biological role, catalyzes the ATP-dependent 2-thiolation of cytidine in position 32 of tRNA, to form 2-thiocytidine (s(2)C32). The sulfur atoms are provided by the cysteine/cysteine desulfurase (IscS) system. This Nitrosomonas eutropha (strain DSM 101675 / C91 / Nm57) protein is tRNA-cytidine(32) 2-sulfurtransferase.